A 368-amino-acid chain; its full sequence is Putative zinc metalloprotease Cj1068 (368 aa).

His36 is a binding site for Zn(2+). Residue Glu37 is part of the active site. His40 is a Zn(2+) binding site. Transmembrane regions (helical) follow at residues 112-134 (IYIL…IIIG), 291-313 (FTLL…LLPI), and 338-360 (TFEY…ATYN). Positions 126-197 (AFFLYIIIGN…LKILINREGK (72 aa)) constitute a PDZ domain.

This sequence belongs to the peptidase M50B family. The cofactor is Zn(2+).

The protein localises to the cell inner membrane. This is Putative zinc metalloprotease Cj1068 from Campylobacter jejuni subsp. jejuni serotype O:2 (strain ATCC 700819 / NCTC 11168).